We begin with the raw amino-acid sequence, 124 residues long: Small ribosomal subunit protein bS6 (124 aa).

The protein belongs to the bacterial ribosomal protein bS6 family.

Functionally, binds together with bS18 to 16S ribosomal RNA. The polypeptide is Small ribosomal subunit protein bS6 (Rippkaea orientalis (strain PCC 8801 / RF-1) (Cyanothece sp. (strain PCC 8801))).